The following is a 230-amino-acid chain: MSSLREIILDTETTGLDPRQGHRIVEIGAIEMVNKVLTGRNFHFYINPERDMPFEAYRIHGISGEFLKDKPLFHTIADDFLEFISDSKLIIHNAPFDIKFLNHELSLLKRTDIKLLELANTIDTLVMARSIFPGSKYNLDALCKRFKVDNSGRQLHGALKDAALLAEVYVELMGGRQSAFKMVDKSAVINNLATNQVNNKTEQTTIVIKPTKEELQKHKEFLSRILKTAY.

Residues Asp-10 and Glu-12 each contribute to the a divalent metal cation site. Substrate contacts are provided by Asp-10, Glu-12, Glu-55, and His-60. Catalysis depends on His-156, which acts as the Proton acceptor. Position 161 (Asp-161) interacts with a divalent metal cation. Asp-161 serves as a coordination point for substrate.

In terms of assembly, DNA polymerase III contains a core (composed of alpha, epsilon and theta chains) that associates with a tau subunit. This core dimerizes to form the POLIII' complex. PolIII' associates with the gamma complex (composed of gamma, delta, delta', psi and chi chains) and with the beta chain to form the complete DNA polymerase III complex. The cofactor is Mg(2+). It depends on Mn(2+) as a cofactor.

The catalysed reaction is DNA(n) + a 2'-deoxyribonucleoside 5'-triphosphate = DNA(n+1) + diphosphate. Its function is as follows. DNA polymerase III is a complex, multichain enzyme responsible for most of the replicative synthesis in bacteria. The epsilon subunit contain the editing function and is a proofreading 3'-5' exonuclease. The sequence is that of DNA polymerase III subunit epsilon (dnaQ) from Rickettsia conorii (strain ATCC VR-613 / Malish 7).